The sequence spans 320 residues: uncharacterized protein (320 aa).

The tract at residues 196–273 (VVPEYDFDSE…RSKNNSNTTK (78 aa)) is disordered. Acidic residues predominate over residues 200 to 210 (YDFDSESESDN). Over residues 211–226 (SEEKRFVPVLETEKAP) the composition is skewed to basic and acidic residues. The span at 248 to 273 (QPKNPKQTTLKNTLDTRSKNNSNTTK) shows a compositional bias: polar residues.

This is an uncharacterized protein from Acanthamoeba polyphaga mimivirus (APMV).